We begin with the raw amino-acid sequence, 624 residues long: LRR receptor kinase BAK1 (624 aa).

A signal peptide spans 1–25 (MAAPRWAVWAVLLLRLLVPAARVLA). The Extracellular segment spans residues 26–237 (NMEGDALHSL…QSPGSSSSTG (212 aa)). LRR repeat units follow at residues 91–115 (LKNLQYLELYSNNISGTIPSELGNL), 117–139 (NLVSLDLYLNNFTGPIPDSLGNL), 140–163 (LKLRFLRLNNNSLSGSIPKSLTAI), and 164–188 (TALQVLDLSNNNLSGEVPSTGSFSL). N-linked (GlcNAc...) asparagine glycans are attached at residues N103, N114, N127, N149, and N175. A disordered region spans residues 205-236 (TTKPCPGAPPFSPPPPYNPPTPVQSPGSSSST). Residues 210-227 (PGAPPFSPPPPYNPPTPV) are compositionally biased toward pro residues. Residues 238-258 (AIAGGVAAGAALLFAIPAIGF) form a helical membrane-spanning segment. At 259–624 (AWYRRRKPQE…LHAVELSGPR (366 aa)) the chain is on the cytoplasmic side. Positions 301–588 (FSNKNILGRG…GLAERWEEWQ (288 aa)) constitute a Protein kinase domain. Residues 307-315 (LGRGGFGKV) and K329 each bind ATP. The active-site Proton acceptor is D428.

This sequence belongs to the protein kinase superfamily. Ser/Thr protein kinase family. Forms homodimers. Interacts with BRI1. Interacts with REM4.1.

It localises to the cell membrane. It carries out the reaction L-seryl-[protein] + ATP = O-phospho-L-seryl-[protein] + ADP + H(+). It catalyses the reaction L-threonyl-[protein] + ATP = O-phospho-L-threonyl-[protein] + ADP + H(+). Its function is as follows. LRR receptor kinase involved in defense response. Does not seem to be required specifically for XA21-mediated immunity or basal resistance to Xanthomonas oryzae pv. oryzae (Xoo), or immunity to Magnaporthe oryzae. Involved in brassinosteroid (BR) signaling pathway. Acts as a coreceptor of BRI1. Forms at the plasma membrane a receptor complex with BRI1 which is activated in response to brassinolide. Phosphorylates BRI1. Required for normal plant growth and leaf development. Possesses kinase activity in vitro. The chain is LRR receptor kinase BAK1 from Oryza sativa subsp. indica (Rice).